A 387-amino-acid polypeptide reads, in one-letter code: Proline-rich protein 5 (387 aa).

Interaction with RICTOR regions lie at residues 10–96 (MSSP…LTKG) and 189–219 (HESR…YGLY). A disordered region spans residues 13-34 (PSLSDLGKREPGAAGTDERGTQ). Residues 18–33 (LGKREPGAAGTDERGT) show a composition bias toward basic and acidic residues. Phosphoserine is present on Ser-253. A disordered region spans residues 262–387 (NPVAEHEAEG…EAPGGRPSVV (126 aa)). Polar residues predominate over residues 305 to 314 (SGTFRSSPTP). Ser-373 bears the Phosphoserine mark.

Belongs to the PROTOR family. In terms of assembly, associated component of the mechanistic target of rapamycin complex 2 (mTORC2). Binds directly to MTOR and RICTOR within the TORC2 complex. As to expression, ubiquitously expressed. Expressed at high levels in kidney.

In terms of biological role, associated subunit of mTORC2, which regulates cell growth and survival in response to hormonal signals. mTORC2 is activated by growth factors, but, in contrast to mTORC1, seems to be nutrient-insensitive. mTORC2 seems to function upstream of Rho GTPases to regulate the actin cytoskeleton, probably by activating one or more Rho-type guanine nucleotide exchange factors. PRR5 plays an important role in regulation of PDGFRB expression and in modulation of platelet-derived growth factor signaling. May act as a tumor suppressor in breast cancer. The sequence is that of Proline-rich protein 5 from Mus musculus (Mouse).